The following is a 396-amino-acid chain: S100P-binding protein (396 aa).

The segment at 145-249 (CDPVLDKDKI…RKNSGSHKSG (105 aa)) is disordered. Composition is skewed to basic and acidic residues over residues 148–161 (VLDK…KETE) and 168–185 (EQTR…RCTE). Composition is skewed to polar residues over residues 202-215 (SSPS…TASD) and 227-246 (VFSQ…SGSH).

In terms of assembly, interacts with S100P.

It is found in the nucleus. This Mus musculus (Mouse) protein is S100P-binding protein.